An 883-amino-acid polypeptide reads, in one-letter code: Envelope glycoprotein B (883 aa).

Positions 1–31 (MQSYIAVNIDMASLKMLICVCVAILIPSTLS) are cleaved as a signal peptide. At 32 to 750 (QDSHGIGWNN…SGIASFLSNP (719 aa)) the chain is on the virion surface side. Disulfide bonds link Cys77/Cys535, Cys94/Cys491, Cys167/Cys229, Cys321/Cys369, and Cys558/Cys608. Residues Asn102 and Asn121 are each glycosylated (N-linked (GlcNAc...) asparagine; by host). The tract at residues 134-140 (TWALFSR) is involved in fusion and/or binding to host membrane. Residue Asn211 is glycosylated (N-linked (GlcNAc...) asparagine; by host). The involved in fusion and/or binding to host membrane stretch occupies residues 216–223 (HQTLGYRT). N-linked (GlcNAc...) asparagine; by host glycosylation is found at Asn262 and Asn360. Positions 428–457 (QNHLPRGRERRQAAGRRTASLQSGPQGDRI) are disordered. N-linked (GlcNAc...) asparagine; by host glycans are attached at residues Asn579, Asn635, and Asn649. Hydrophobic membrane proximal region regions lie at residues 694–748 (IDTV…SFLS) and 724–744 (ALGT…SGIA). A helical membrane pass occupies residues 751-771 (FAALAIGIAVVVSIILGLLAF). At 772 to 883 (KYVMNLKSNP…PSWAEESEDE (112 aa)) the chain is on the intravirion side. The disordered stretch occupies residues 791–817 (PPAGTPPRPSRRYYKDEEEVEEDSDED). The segment covering 806 to 817 (DEEEVEEDSDED) has biased composition (acidic residues). The Internalization motif signature appears at 868–871 (YPLL).

The protein belongs to the herpesviridae glycoprotein B family. Homotrimer; disulfide-linked. Binds to heparan sulfate proteoglycans. Interacts with gH/gL heterodimer. In terms of processing, a proteolytic cleavage by host furin generates two subunits that remain linked by disulfide bonds.

The protein resides in the virion membrane. Its subcellular location is the host cell membrane. It is found in the host endosome membrane. The protein localises to the host Golgi apparatus membrane. In terms of biological role, envelope glycoprotein that forms spikes at the surface of virion envelope. Essential for the initial attachment to heparan sulfate moieties of the host cell surface proteoglycans. Involved in fusion of viral and cellular membranes leading to virus entry into the host cell. Following initial binding to its host receptors, membrane fusion is mediated by the fusion machinery composed at least of gB and the heterodimer gH/gL. May be involved in the fusion between the virion envelope and the outer nuclear membrane during virion egress. This is Envelope glycoprotein B from Infectious laryngotracheitis virus (strain SA-2) (ILTV).